Consider the following 466-residue polypeptide: Phosphomethylpyrimidine synthase (466 aa).

Substrate contacts are provided by residues Asn-80, Met-109, Tyr-139, His-175, 195-197, 236-239, and Glu-275; these read SRG and DSLR. His-279 lines the Zn(2+) pocket. Tyr-302 provides a ligand contact to substrate. His-343 contributes to the Zn(2+) binding site. 3 residues coordinate [4Fe-4S] cluster: Cys-423, Cys-426, and Cys-431.

Belongs to the ThiC family. The cofactor is [4Fe-4S] cluster.

It carries out the reaction 5-amino-1-(5-phospho-beta-D-ribosyl)imidazole + S-adenosyl-L-methionine = 4-amino-2-methyl-5-(phosphooxymethyl)pyrimidine + CO + 5'-deoxyadenosine + formate + L-methionine + 3 H(+). It functions in the pathway cofactor biosynthesis; thiamine diphosphate biosynthesis. Its function is as follows. Catalyzes the synthesis of the hydroxymethylpyrimidine phosphate (HMP-P) moiety of thiamine from aminoimidazole ribotide (AIR) in a radical S-adenosyl-L-methionine (SAM)-dependent reaction. The protein is Phosphomethylpyrimidine synthase of Synechococcus sp. (strain RCC307).